Here is a 393-residue protein sequence, read N- to C-terminus: Elongation factor Tu (393 aa).

Positions 10–203 (KPHVNIGTIG…AVDAFIPDPV (194 aa)) constitute a tr-type G domain. A G1 region spans residues 19–26 (GHVDHGKT). Residue 19–26 (GHVDHGKT) participates in GTP binding. Threonine 26 contacts Mg(2+). The tract at residues 60–64 (GITIS) is G2. Residues 81–84 (DCPG) form a G3 region. GTP-binding positions include 81 to 85 (DCPGH) and 136 to 139 (NKVD). The tract at residues 136–139 (NKVD) is G4. A G5 region spans residues 173–175 (SAL).

This sequence belongs to the TRAFAC class translation factor GTPase superfamily. Classic translation factor GTPase family. EF-Tu/EF-1A subfamily. As to quaternary structure, monomer.

It localises to the cytoplasm. It carries out the reaction GTP + H2O = GDP + phosphate + H(+). Its function is as follows. GTP hydrolase that promotes the GTP-dependent binding of aminoacyl-tRNA to the A-site of ribosomes during protein biosynthesis. The polypeptide is Elongation factor Tu (Chlorobium chlorochromatii (strain CaD3)).